Consider the following 271-residue polypeptide: Shikimate dehydrogenase (NADP(+)) (271 aa).

Shikimate contacts are provided by residues 16-18 (SRS) and threonine 63. Residue lysine 67 is the Proton acceptor of the active site. 2 residues coordinate shikimate: asparagine 88 and aspartate 104. Residues 128–132 (GAGGA), 152–157 (NRTASK), and methionine 215 each bind NADP(+). Tyrosine 217 is a shikimate binding site. Glycine 238 serves as a coordination point for NADP(+).

Belongs to the shikimate dehydrogenase family. In terms of assembly, homodimer.

It catalyses the reaction shikimate + NADP(+) = 3-dehydroshikimate + NADPH + H(+). Its pathway is metabolic intermediate biosynthesis; chorismate biosynthesis; chorismate from D-erythrose 4-phosphate and phosphoenolpyruvate: step 4/7. In terms of biological role, involved in the biosynthesis of the chorismate, which leads to the biosynthesis of aromatic amino acids. Catalyzes the reversible NADPH linked reduction of 3-dehydroshikimate (DHSA) to yield shikimate (SA). This chain is Shikimate dehydrogenase (NADP(+)), found in Chromohalobacter salexigens (strain ATCC BAA-138 / DSM 3043 / CIP 106854 / NCIMB 13768 / 1H11).